Reading from the N-terminus, the 265-residue chain is Deoxyribose-phosphate aldolase 2 (265 aa).

Aspartate 108 functions as the Proton donor/acceptor in the catalytic mechanism. The active-site Schiff-base intermediate with acetaldehyde is lysine 173. Residue lysine 207 is the Proton donor/acceptor of the active site.

The protein belongs to the DeoC/FbaB aldolase family. DeoC type 2 subfamily.

It is found in the cytoplasm. It catalyses the reaction 2-deoxy-D-ribose 5-phosphate = D-glyceraldehyde 3-phosphate + acetaldehyde. It functions in the pathway carbohydrate degradation; 2-deoxy-D-ribose 1-phosphate degradation; D-glyceraldehyde 3-phosphate and acetaldehyde from 2-deoxy-alpha-D-ribose 1-phosphate: step 2/2. Its function is as follows. Catalyzes a reversible aldol reaction between acetaldehyde and D-glyceraldehyde 3-phosphate to generate 2-deoxy-D-ribose 5-phosphate. This chain is Deoxyribose-phosphate aldolase 2 (deoC2), found in Yersinia pestis.